Here is a 268-residue protein sequence, read N- to C-terminus: Glutamate racemase (268 aa).

Substrate is bound by residues 10-11 (DS) and 42-43 (YG). C73 acts as the Proton donor/acceptor in catalysis. 74 to 75 (NT) is a binding site for substrate. C184 serves as the catalytic Proton donor/acceptor. 185 to 186 (TH) contributes to the substrate binding site.

Belongs to the aspartate/glutamate racemases family.

The enzyme catalyses L-glutamate = D-glutamate. It participates in cell wall biogenesis; peptidoglycan biosynthesis. Provides the (R)-glutamate required for cell wall biosynthesis. The protein is Glutamate racemase of Limosilactobacillus fermentum (strain NBRC 3956 / LMG 18251) (Lactobacillus fermentum).